The sequence spans 332 residues: Phosphate acyltransferase (332 aa).

It belongs to the PlsX family. Homodimer. Probably interacts with PlsY.

The protein resides in the cytoplasm. The catalysed reaction is a fatty acyl-[ACP] + phosphate = an acyl phosphate + holo-[ACP]. It functions in the pathway lipid metabolism; phospholipid metabolism. Functionally, catalyzes the reversible formation of acyl-phosphate (acyl-PO(4)) from acyl-[acyl-carrier-protein] (acyl-ACP). This enzyme utilizes acyl-ACP as fatty acyl donor, but not acyl-CoA. This is Phosphate acyltransferase from Bacillus pumilus (strain SAFR-032).